A 331-amino-acid chain; its full sequence is Type 2 lactosamine alpha-2,3-sialyltransferase (331 aa).

Residues 1-4 (MKGY) are Cytoplasmic-facing. Residues 5–25 (VVAIFLSSIFLYYVLYCILWG) traverse the membrane as a helical; Signal-anchor for type II membrane protein segment. At 26–331 (TNGYWFPNEE…KKMVINLTQN (306 aa)) the chain is on the lumenal side. Asn-129, Asn-181, Asn-295, Asn-308, and Asn-327 each carry an N-linked (GlcNAc...) asparagine glycan.

It belongs to the glycosyltransferase 29 family.

It localises to the golgi apparatus membrane. The catalysed reaction is a neolactoside nLc4Cer(d18:1(4E)) + CMP-N-acetyl-beta-neuraminate = a neolactoside IV(3)-alpha-NeuAc-nLc4Cer(d18:1(4E)) + CMP + H(+). It carries out the reaction a beta-D-galactosyl-(1-&gt;4)-N-acetyl-beta-D-glucosaminyl derivative + CMP-N-acetyl-beta-neuraminate = an N-acetyl-alpha-neuraminyl-(2-&gt;3)-beta-D-galactosyl-(1-&gt;4)-N-acetyl-beta-D-glucosaminyl derivative + CMP + H(+). It catalyses the reaction a neolactoside nLc6Cer(d18:1(4E)) + CMP-N-acetyl-beta-neuraminate = a neolactoside VI(3)-alpha-NeuNAc-nLc6Cer(d18:1(4E)) + CMP + H(+). Functionally, transfers the sialyl residue from CMP-N-acetyl-beta-neuraminate to the terminal galactose residue on sugar chains of glycoproteins and glycolipids. It's alpha-2,3-sialyltransferase activity is specific toward type II glycan chains (Galbeta1-4GlcNAc) on glycoproteins and glycolipids such as neolactosides nLc4Cer and nLc6Cer, whose sialyl-products serve as precursors for the Lewis X antigen. Critically involved in the synthesis of functional selectin ligands needed for neutrophil recruitment during inflammation and lymphocyte homing to the lymph nodes. The protein is Type 2 lactosamine alpha-2,3-sialyltransferase (St3gal6) of Rattus norvegicus (Rat).